The chain runs to 1054 residues: DIS3-like exonuclease 1 (1054 aa).

The region spanning 236–313 is the CSD1 domain; the sequence is AGIKSGRYIQ…WKGRTAALCE (78 aa). The segment at 313 to 332 is disordered; that stretch reads ENDSEDKASGESPSEPMPTG. In terms of domain architecture, CSD2 spans 365–431; it reads ILVTPWDYRI…GEIATILVEN (67 aa). The RNB domain occupies 465–816; the sequence is RRDLRSTHLV…VHRLLMAAIS (352 aa). Serine 989 bears the Phosphoserine mark.

This sequence belongs to the RNR ribonuclease family. In terms of assembly, component of the RNA exosome complex. The catalytically inactive RNA exosome core (Exo-9) complex is believed to associate with catalytic subunits EXOSC10, and DIS3 or DIS3L in cytoplasmic- and nuclear-specific RNA exosome complex forms. Mg(2+) is required as a cofactor.

It localises to the cytoplasm. The catalysed reaction is Exonucleolytic cleavage in the 3'- to 5'-direction to yield nucleoside 5'-phosphates.. In terms of biological role, catalytic component of the RNA exosome complex which has 3'-&gt;5' exoribonuclease activity and participates in a multitude of cellular RNA processing and degradation events. In the cytoplasm, the RNA exosome complex is involved in general mRNA turnover and specifically degrades inherently unstable mRNAs containing AU-rich elements (AREs) within their 3' untranslated regions, and in RNA surveillance pathways, preventing translation of aberrant mRNAs. It seems to be involved in degradation of histone mRNA. This Rattus norvegicus (Rat) protein is DIS3-like exonuclease 1 (Dis3l).